Reading from the N-terminus, the 112-residue chain is Large ribosomal subunit protein eL30x (112 aa).

This sequence belongs to the eukaryotic ribosomal protein eL30 family.

This chain is Large ribosomal subunit protein eL30x (RPL30C), found in Arabidopsis thaliana (Mouse-ear cress).